Consider the following 167-residue polypeptide: MSKETIAVKAQEVEEVAEQLKSSVSAIVVDYRGLTVEQVTDLRKQLREAGVKMRVIKNKIMVRAADKAGFEDLKPVFAGPTAVAFSEEDPVAPAKILANFAKTADALQLKGGVIEGKVADLETVQEYATMPSREELLATIANLLQAPVRNVAYAVKAVAEKGDEDAA.

Belongs to the universal ribosomal protein uL10 family. Part of the ribosomal stalk of the 50S ribosomal subunit. The N-terminus interacts with L11 and the large rRNA to form the base of the stalk. The C-terminus forms an elongated spine to which L12 dimers bind in a sequential fashion forming a multimeric L10(L12)X complex.

Its function is as follows. Forms part of the ribosomal stalk, playing a central role in the interaction of the ribosome with GTP-bound translation factors. This is Large ribosomal subunit protein uL10 from Lactiplantibacillus plantarum (strain ATCC BAA-793 / NCIMB 8826 / WCFS1) (Lactobacillus plantarum).